Reading from the N-terminus, the 499-residue chain is Thioredoxin reductase 1, cytoplasmic (499 aa).

Residues 22–23 (SG), 42–43 (DF), 58–59 (TC), and 63–67 (GCIPK) contribute to the FAD site. A disulfide bridge links Cys59 with Cys64. At Lys68 the chain carries N6-succinyllysine. Residue Tyr131 is modified to Phosphotyrosine. FAD contacts are provided by residues 131 to 132 (YG) and Thr161. NADP(+) is bound by residues Arg166, 198-204 (ASYVALE), 221-222 (RS), Arg226, 226-228 (RGF), 292-293 (GR), and Lys315. FAD is bound at residue Tyr200. FAD is bound by residues Asp334, 341–343 (ELT), and His472. Glu341 is an NADP(+) binding site. His472 serves as the catalytic Proton acceptor. Positions 497-498 (CU) form a cross-link, cysteinyl-selenocysteine (Cys-Sec). Position 498 (Sec498) is a non-standard amino acid, selenocysteine.

It belongs to the class-I pyridine nucleotide-disulfide oxidoreductase family. Homodimer. FAD serves as cofactor. Post-translationally, ISGylated.

It localises to the cytoplasm. The catalysed reaction is [thioredoxin]-dithiol + NADP(+) = [thioredoxin]-disulfide + NADPH + H(+). It catalyses the reaction H2O2 + NADPH + H(+) = NADP(+) + 2 H2O. In terms of biological role, reduces disulfideprotein thioredoxin (Trx) to its dithiol-containing form. Homodimeric flavoprotein involved in the regulation of cellular redox reactions, growth and differentiation. Contains a selenocysteine residue at the C-terminal active site that is essential for catalysis. Also has reductase activity on hydrogen peroxide (H2O2). This chain is Thioredoxin reductase 1, cytoplasmic (TXNRD1), found in Bos taurus (Bovine).